Here is a 310-residue protein sequence, read N- to C-terminus: uncharacterized protein (310 aa).

Residue H239 is part of the active site.

The protein belongs to the IUNH family.

It localises to the cytoplasm. The protein localises to the nucleus. This is an uncharacterized protein from Schizosaccharomyces pombe (strain 972 / ATCC 24843) (Fission yeast).